A 241-amino-acid polypeptide reads, in one-letter code: Small ribosomal subunit protein uS2 (241 aa).

The protein belongs to the universal ribosomal protein uS2 family.

In Photorhabdus laumondii subsp. laumondii (strain DSM 15139 / CIP 105565 / TT01) (Photorhabdus luminescens subsp. laumondii), this protein is Small ribosomal subunit protein uS2.